A 288-amino-acid polypeptide reads, in one-letter code: Ankyrin repeat and SOCS box protein 8 (288 aa).

Ser17 is modified (phosphoserine). 4 ANK repeats span residues 52 to 81 (GTLK…EVNA), 85 to 113 (YNRT…NPNA), 117 to 146 (NRDT…SVNA), and 150 to 179 (NNDT…EVRV). The SOCS box domain occupies 235–288 (QLCEKLTVLCSAPGTLKTLARYTVRRSLGLQYLPDAVKGLPLPASLKEYLLLLE).

It belongs to the ankyrin SOCS box (ASB) family. As to quaternary structure, interacts with TBK1; this interaction promotes TBK1 proteasomal degradation. Post-translationally, phosphorylated by TBK1.

It is found in the cytoplasm. Its pathway is protein modification; protein ubiquitination. Functionally, may be a substrate-recognition component of a SCF-like ECS (Elongin-Cullin-SOCS-box protein) E3 ubiquitin-protein ligase complex which mediates the ubiquitination and subsequent proteasomal degradation of target proteins. Inhibits IFN-beta production through the IRF3 signaling pathway by targeting TBK1 via 'Lys-48'-linked ubiquitination, leading to its proteasomal degradation. The sequence is that of Ankyrin repeat and SOCS box protein 8 (ASB8) from Pongo abelii (Sumatran orangutan).